The primary structure comprises 996 residues: GPI ethanolamine phosphate transferase 1 (996 aa).

Topologically, residues Met1 to Arg8 are cytoplasmic. The helical transmembrane segment at Phe9–Phe29 threads the bilayer. The Lumenal segment spans residues Val30–Arg463. N-linked (GlcNAc...) asparagine glycosylation is found at Asn47, Asn147, and Asn210. Residues Ala464 to Leu484 form a helical membrane-spanning segment. Residues His485–Arg495 lie on the Cytoplasmic side of the membrane. The helical transmembrane segment at Thr496 to Ile516 threads the bilayer. Topologically, residues Ser517 to Lys518 are lumenal. A helical membrane pass occupies residues Ser519–Ala539. Residues His540–Ser560 are Cytoplasmic-facing. The helical transmembrane segment at Val561–Gly581 threads the bilayer. Over Tyr582–Glu586 the chain is Lumenal. Residues Ile587–Leu607 form a helical membrane-spanning segment. The Cytoplasmic segment spans residues Lys608–Ala612. The chain crosses the membrane as a helical span at residues Leu613–Met633. Over Lys634 to Asn637 the chain is Lumenal. The helical transmembrane segment at Val638–Phe658 threads the bilayer. Topologically, residues Glu659–Ser681 are cytoplasmic. A helical membrane pass occupies residues Leu682–Leu702. Over Ser703 to Gln715 the chain is Lumenal. A helical transmembrane segment spans residues Ile716–Leu734. Over Arg735–Thr754 the chain is Cytoplasmic. The chain crosses the membrane as a helical span at residues Phe755–Val775. At Ser776–Arg822 the chain is on the lumenal side. Residues Val823 to Ser843 form a helical membrane-spanning segment. Topologically, residues Val844–Gly865 are cytoplasmic. Residues Ala866 to Leu886 form a helical membrane-spanning segment. Topologically, residues Asn887–Ser895 are lumenal. The chain crosses the membrane as a helical span at residues Ala896–Val916. Topologically, residues Lys917–Phe932 are cytoplasmic. The helical transmembrane segment at Val933–Ile953 threads the bilayer. The Lumenal segment spans residues Ala954–Ser996.

The protein belongs to the PIGG/PIGN/PIGO family. PIGN subfamily.

The protein resides in the endoplasmic reticulum membrane. Its pathway is glycolipid biosynthesis; glycosylphosphatidylinositol-anchor biosynthesis. Its function is as follows. Ethanolamine phosphate transferase involved in glycosylphosphatidylinositol-anchor biosynthesis. Transfers ethanolamine phosphate to the first alpha-1,4-linked mannose of the glycosylphosphatidylinositol precursor of GPI-anchor. This is GPI ethanolamine phosphate transferase 1 (mcd-4) from Neurospora crassa (strain ATCC 24698 / 74-OR23-1A / CBS 708.71 / DSM 1257 / FGSC 987).